We begin with the raw amino-acid sequence, 324 residues long: Arginase (324 aa).

Residues His-115, Asp-143, His-145, and Asp-147 each coordinate Mn(2+). Substrate contacts are provided by residues 145–149 (HADIN), 156–158 (SGN), and Asp-202. Positions 249 and 251 each coordinate Mn(2+). 2 residues coordinate substrate: Thr-263 and Glu-294.

The protein belongs to the arginase family. In terms of assembly, homotrimer. Requires Mn(2+) as cofactor.

It carries out the reaction L-arginine + H2O = urea + L-ornithine. It participates in nitrogen metabolism; urea cycle; L-ornithine and urea from L-arginine: step 1/1. This Emericella nidulans (strain FGSC A4 / ATCC 38163 / CBS 112.46 / NRRL 194 / M139) (Aspergillus nidulans) protein is Arginase (agaA).